Reading from the N-terminus, the 301-residue chain is Haloalkane dehalogenase (301 aa).

The 238-residue stretch at 47–284 (PPIVLLHGEP…INASHFIQED (238 aa)) folds into the AB hydrolase-1 domain. Asp-123 serves as the catalytic Nucleophile. The active-site Proton donor is Asp-250. His-279 acts as the Proton acceptor in catalysis.

This sequence belongs to the haloalkane dehalogenase family. Type 1 subfamily. In terms of assembly, monomer.

The enzyme catalyses 1-haloalkane + H2O = a halide anion + a primary alcohol + H(+). Catalyzes hydrolytic cleavage of carbon-halogen bonds in halogenated aliphatic compounds, leading to the formation of the corresponding primary alcohols, halide ions and protons. The polypeptide is Haloalkane dehalogenase (Mycolicibacterium paratuberculosis (strain ATCC BAA-968 / K-10) (Mycobacterium paratuberculosis)).